Here is a 148-residue protein sequence, read N- to C-terminus: Large ribosomal subunit protein uL15 (148 aa).

Over residues 1–30 (MSTHKKKTRKLRGHVSHGHGRIGKHRKHPG) the composition is skewed to basic residues. The disordered stretch occupies residues 1 to 37 (MSTHKKKTRKLRGHVSHGHGRIGKHRKHPGGRGNAGG).

This sequence belongs to the universal ribosomal protein uL15 family.

This Tenebrio molitor (Yellow mealworm beetle) protein is Large ribosomal subunit protein uL15 (RpL27A).